The chain runs to 643 residues: Methyl-accepting chemotaxis protein McpA (643 aa).

A helical transmembrane segment spans residues 24 to 44; that stretch reads ILLSACGVVVLAFALFTLYND. The region spanning 49–273 is the Cache domain; sequence NTIRQNIEAS…GLPSAQWYIG (225 aa). A helical membrane pass occupies residues 293 to 313; sequence IIAMLIAVAAIAGLLGLLIPV. Positions 312-366 constitute an HAMP domain; that stretch reads PVLMSPLTTMGRAMRDIAEGEGDLTRRLAVQNKDEFGELATSFNRFVERIHASIS. The region spanning 371 to 607 is the Methyl-accepting transducer domain; that stretch reads ATRLVHDLSE…SLNLDITQIN (237 aa).

It belongs to the methyl-accepting chemotaxis (MCP) protein family.

The protein localises to the cell membrane. In terms of biological role, chemotactic-signal transducers respond to changes in the concentration of attractants and repellents in the environment, transduce a signal from the outside to the inside of the cell, and facilitate sensory adaptation through the variation of the level of methylation. McpA is a chemoreceptor that binds to 12 different L-amino acids and mediates chemotaxis toward these amino acids. This is Methyl-accepting chemotaxis protein McpA from Pseudomonas putida (strain ATCC 47054 / DSM 6125 / CFBP 8728 / NCIMB 11950 / KT2440).